A 426-amino-acid chain; its full sequence is Serine--tRNA ligase (426 aa).

231–233 (TSE) provides a ligand contact to L-serine. 262–264 (RSE) contributes to the ATP binding site. Position 285 (glutamate 285) interacts with L-serine. ATP is bound at residue 349–352 (EISS). An L-serine-binding site is contributed by serine 385.

This sequence belongs to the class-II aminoacyl-tRNA synthetase family. Type-1 seryl-tRNA synthetase subfamily. In terms of assembly, homodimer. The tRNA molecule binds across the dimer.

It localises to the cytoplasm. The enzyme catalyses tRNA(Ser) + L-serine + ATP = L-seryl-tRNA(Ser) + AMP + diphosphate + H(+). It catalyses the reaction tRNA(Sec) + L-serine + ATP = L-seryl-tRNA(Sec) + AMP + diphosphate + H(+). Its pathway is aminoacyl-tRNA biosynthesis; selenocysteinyl-tRNA(Sec) biosynthesis; L-seryl-tRNA(Sec) from L-serine and tRNA(Sec): step 1/1. In terms of biological role, catalyzes the attachment of serine to tRNA(Ser). Is also able to aminoacylate tRNA(Sec) with serine, to form the misacylated tRNA L-seryl-tRNA(Sec), which will be further converted into selenocysteinyl-tRNA(Sec). The polypeptide is Serine--tRNA ligase (Legionella pneumophila (strain Corby)).